The following is a 923-amino-acid chain: DNA mismatch repair protein MutS (923 aa).

671-678 contributes to the ATP binding site; it reads GPNMAGKS.

The protein belongs to the DNA mismatch repair MutS family.

Its function is as follows. This protein is involved in the repair of mismatches in DNA. It is possible that it carries out the mismatch recognition step. This protein has a weak ATPase activity. In Rhodopseudomonas palustris (strain BisB5), this protein is DNA mismatch repair protein MutS.